Here is a 102-residue protein sequence, read N- to C-terminus: RNA-binding protein Hfq (102 aa).

One can recognise a Sm domain in the interval 9-68 (DPFLNALRRERVPVSIYLVNGIKLQGQIESFDQFVILLKNTVSQMVYKHAISTVVPSRPV). Positions 65 to 102 (SRPVSHHSSNTSVGASVGNYHSGGVSAPAAQQESDGTE) are disordered. A compositionally biased stretch (polar residues) spans 93 to 102 (AAQQESDGTE).

Belongs to the Hfq family. Homohexamer.

In terms of biological role, RNA chaperone that binds small regulatory RNA (sRNAs) and mRNAs to facilitate mRNA translational regulation in response to envelope stress, environmental stress and changes in metabolite concentrations. Also binds with high specificity to tRNAs. This Photorhabdus laumondii subsp. laumondii (strain DSM 15139 / CIP 105565 / TT01) (Photorhabdus luminescens subsp. laumondii) protein is RNA-binding protein Hfq.